Reading from the N-terminus, the 823-residue chain is Putative ankyrin repeat domain-containing protein 20A3 (823 aa).

5 ANK repeats span residues 66–95 (QHRT…QIDV), 99–128 (ENRT…NPNL), 132–161 (YGNT…HIEA), 165–194 (DNNT…SSHA), and 198–227 (LRRS…DVFA). Disordered stretches follow at residues 301–343 (VPEK…EVED) and 355–402 (VQTL…LSEN). The span at 372–384 (QERHERSEKKQPQ) shows a compositional bias: basic and acidic residues. 3 coiled-coil regions span residues 431 to 480 (KKLK…KQLE), 571 to 724 (AFRY…NNST), and 776 to 805 (LVLE…EKTE).

This Homo sapiens (Human) protein is Putative ankyrin repeat domain-containing protein 20A3.